The following is a 92-amino-acid chain: Putative septation protein SpoVG (92 aa).

It belongs to the SpoVG family.

Functionally, could be involved in septation. This is Putative septation protein SpoVG from Clostridioides difficile (strain 630) (Peptoclostridium difficile).